Reading from the N-terminus, the 293-residue chain is Dioxygenase cdmA (293 aa).

3 residues coordinate Fe cation: His-135, Asp-137, and His-212.

Belongs to the PhyH family. Homodimer. Requires Fe cation as cofactor.

It catalyses the reaction chrodrimanin C + 2-oxoglutarate + O2 = verruculide A + succinate + CO2 + H2O. It carries out the reaction chrodrimanin H + 2-oxoglutarate + O2 = chrodrimanin E + succinate + CO2 + H2O. The protein operates within secondary metabolite biosynthesis; terpenoid biosynthesis. Functionally, dioxygenase; part of the gene cluster that mediates the biosynthesis of chrodrimanin B, a meroterpenoid that acts as a potent blocker of insect GABA-gated chloride channels. The first step of the pathway is the biosynthesis of 6-hydroxymellein by the polyketide synthase cdmE. The prenyltransferase cdmH acts as a 6-hydroxymellein 5-farnesyltransferase and produces the hydrophobic metabolite verruculide C. The FAD-dependent monooxygenase cdmI further converts verruculide C into verruculide B. The terpene cyclase cdmG then produced the pentacyclic molecule 3-hydroxypentacecilide A, the backbone structure of chrodrimanin B, via folding the farnesyl moiety of the substrate into the chair-boat conformation. The short-chain dehydrogenase/reductase cdmF functions as the 3-OH dehydrogenase that oxidizes the C-3 hydroxyl group of 3-hydroxypentacecilide A and produces chrodrimanin C, the dehydrogenated product of 3-hydroxypentacecilide A. The cytochrome P450 monooxygenase cdmJ then accepts both 3-hydroxypentacecilide A and chrodrimanin C and functions as a C-7-beta-hydroxylase to produce respectively chrodrimanin H and chrodrimanin F. The dioxygenase cdmA accepts chrodrimanin H to afford chrodrimanin E, which is further transformed to chrodrimanin A by the dioxygenase cdmD. CdmA can also accept chrodrimanin C as substrate to convert it into verruculide A, which is further converted into chrodrimanin T by cdmD. The last step of the biosynthesis is proposed to be performed by the acetyltransferase cdmC which acetylates chrodrimanin A to yield chrodrimanin B. The pathway may also lead to the production of additional shunt products, including chrodrimanins T and U. The polypeptide is Dioxygenase cdmA (Talaromyces verruculosus (Penicillium verruculosum)).